The following is a 231-amino-acid chain: Large ribosomal subunit protein uL1 (231 aa).

This sequence belongs to the universal ribosomal protein uL1 family. Part of the 50S ribosomal subunit.

Functionally, binds directly to 23S rRNA. The L1 stalk is quite mobile in the ribosome, and is involved in E site tRNA release. In terms of biological role, protein L1 is also a translational repressor protein, it controls the translation of the L11 operon by binding to its mRNA. The sequence is that of Large ribosomal subunit protein uL1 from Mesomycoplasma hyopneumoniae (strain 232) (Mycoplasma hyopneumoniae).